The chain runs to 378 residues: Sphingosine 1-phosphate receptor 3 (378 aa).

The Extracellular portion of the chain corresponds to 1-44; it reads MATTHAQGHQPVLGNDTLREHYDYVGKLAGRLRDPPEGGTLITT. Residue asparagine 15 is glycosylated (N-linked (GlcNAc...) asparagine). The helical transmembrane segment at 45-65 threads the bilayer; it reads ILFLVTCSFIVLENLMVLIAI. At 66-74 the chain is on the cytoplasmic side; sequence WKNNKFHNR. The helical transmembrane segment at 75–95 threads the bilayer; sequence MYFFIGNLALCDLLAGIAYKV. The Extracellular portion of the chain corresponds to 96 to 115; sequence NILMSGRKTFSLSPTVWFLR. A helical membrane pass occupies residues 116–136; the sequence is EGSMFVALGASTCSLLAIAIE. The Cytoplasmic segment spans residues 137-154; that stretch reads RHLTMIKMRPYDANKKHR. A helical membrane pass occupies residues 155 to 175; sequence VFLLIGMCWLIAFSLGALPIL. At 176-196 the chain is on the extracellular side; that stretch reads GWNCLENFPDCSTILPLYSKK. A helical membrane pass occupies residues 197 to 217; that stretch reads YIAFLISIFTAILVTIVILYA. Residues 218-244 are Cytoplasmic-facing; sequence RIYCLVKSSSRRVANHNSERSMALLRT. The chain crosses the membrane as a helical span at residues 245-265; sequence VVIVVSVFIACWSPLFILFLI. Topologically, residues 266–281 are extracellular; that stretch reads DVACRAKECSILFKSQ. The chain crosses the membrane as a helical span at residues 282 to 302; sequence WFIMLAVLNSAMNPVIYTLAS. Topologically, residues 303–378 are cytoplasmic; sequence KEMRRAFFRL…RSFQNGVLCK (76 aa). Residues 323–354 form a disordered region; sequence TQASPMQPALDPSRSKSSSSNNSSHSPKVKED. Serine 326 is subject to Phosphoserine. The span at 337 to 348 shows a compositional bias: low complexity; that stretch reads SKSSSSNNSSHS.

It belongs to the G-protein coupled receptor 1 family. Most abundant in heart, lung, kidney and spleen; low but detectable in brain, thymus, muscle and testis; and nearly undetectable in liver, stomach, and intestine. Expressed in embryonic lung from embryonic day 14-18. Also abundantly detected in embryonic nasal cartilage, sphenoid bone, vena cava, Meckel's cartilage/incisor teeth, genital tubercle and bladder.

The protein localises to the cell membrane. Functionally, receptor for the lysosphingolipid sphingosine 1-phosphate (S1P). S1P is a bioactive lysophospholipid that elicits diverse physiological effect on most types of cells and tissues. This Mus musculus (Mouse) protein is Sphingosine 1-phosphate receptor 3 (S1pr3).